The following is a 319-amino-acid chain: Glutathione synthetase (319 aa).

Residues 125 to 311 enclose the ATP-grasp domain; the sequence is EKLFATLFPQ…IGGLLMDAIE (187 aa). ATP is bound at residue 151 to 208; that stretch reads FAEQQGDVILKPLDGMGGASIFRHRAGDPNLSVILETLTAHGTQQIMAQGYLPAIKDG. 2 residues coordinate Mg(2+): E282 and N284.

The protein belongs to the prokaryotic GSH synthase family. Requires Mg(2+) as cofactor. Mn(2+) serves as cofactor.

It catalyses the reaction gamma-L-glutamyl-L-cysteine + glycine + ATP = glutathione + ADP + phosphate + H(+). It functions in the pathway sulfur metabolism; glutathione biosynthesis; glutathione from L-cysteine and L-glutamate: step 2/2. This Pseudomonas syringae pv. tomato (strain ATCC BAA-871 / DC3000) protein is Glutathione synthetase.